The sequence spans 157 residues: S-ribosylhomocysteine lyase (157 aa).

Positions 53, 57, and 124 each coordinate Fe cation.

This sequence belongs to the LuxS family. Homodimer. Requires Fe cation as cofactor.

It catalyses the reaction S-(5-deoxy-D-ribos-5-yl)-L-homocysteine = (S)-4,5-dihydroxypentane-2,3-dione + L-homocysteine. Involved in the synthesis of autoinducer 2 (AI-2) which is secreted by bacteria and is used to communicate both the cell density and the metabolic potential of the environment. The regulation of gene expression in response to changes in cell density is called quorum sensing. Catalyzes the transformation of S-ribosylhomocysteine (RHC) to homocysteine (HC) and 4,5-dihydroxy-2,3-pentadione (DPD). This chain is S-ribosylhomocysteine lyase, found in Borrelia garinii subsp. bavariensis (strain ATCC BAA-2496 / DSM 23469 / PBi) (Borreliella bavariensis).